A 501-amino-acid chain; its full sequence is Pre-mRNA-splicing factor 38B (501 aa).

Over residues 1–11 (MAGSQQQQQQQ) the composition is skewed to low complexity. Disordered regions lie at residues 1–28 (MAGSQQQQQQQAVSKPTGGKHGNNLPLW) and 208–501 (DQHM…ADSP). Residues 243 to 273 (GDKRRSRTPRRSPSPRKSQNRSRSRSHHRER) are compositionally biased toward basic residues. A coiled-coil region spans residues 281–302 (ELERERDRQRKEREGKDRDRDR). A compositionally biased stretch (basic and acidic residues) spans 281 to 328 (ELERERDRQRKEREGKDRDRDRDRDRERDRERDRDRRRSRTPDRNAER). The segment covering 329–341 (RRSRSRERRRSRS) has biased composition (basic residues). Residues 342–408 (TSRDKRTERK…EEKKHREEKR (67 aa)) are compositionally biased toward basic and acidic residues. The span at 409–435 (SKRSRSRSRDRKHKAERSSKKRSRSGS) shows a compositional bias: basic residues. Basic and acidic residues predominate over residues 437 to 447 (SRQEAGEEKNR). Positions 448 to 468 (KRERSHSKDRQHKRSRSKERS) are enriched in basic residues. Residues 469 to 491 (HRRESSNERIHARQERPSSESGE) are compositionally biased toward basic and acidic residues. Residues 492-501 (RTNSVRADSP) show a composition bias toward polar residues.

This sequence belongs to the PRP38 family.

The protein resides in the nucleus. Its function is as follows. May be required for pre-mRNA splicing. This is Pre-mRNA-splicing factor 38B (prpf38b) from Danio rerio (Zebrafish).